A 121-amino-acid chain; its full sequence is UPF0102 protein Dhaf_3740 (121 aa).

This sequence belongs to the UPF0102 family.

This is UPF0102 protein Dhaf_3740 from Desulfitobacterium hafniense (strain DSM 10664 / DCB-2).